The primary structure comprises 417 residues: Ig-like V-type domain-containing protein FAM187A (417 aa).

Residues Met1–Ala18 form the signal peptide. The Extracellular segment spans residues Phe19–Thr377. N-linked (GlcNAc...) asparagine glycosylation is found at Asn248 and Asn318. One can recognise an Ig-like V-type domain in the interval Pro268–Thr362. A disulfide bridge links Cys290 with Cys346. A helical membrane pass occupies residues Ala378–Leu398. Over Cys399–Leu417 the chain is Cytoplasmic.

Belongs to the FAM187 family.

The protein localises to the membrane. This Mus musculus (Mouse) protein is Ig-like V-type domain-containing protein FAM187A (Fam187a).